Here is a 386-residue protein sequence, read N- to C-terminus: uncharacterized protein (386 aa).

Belongs to the TelA family.

This is an uncharacterized protein from Bacillus subtilis (strain 168).